The primary structure comprises 238 residues: Pyridoxine 5'-phosphate synthase (238 aa).

N9 contributes to the 3-amino-2-oxopropyl phosphate binding site. Residue 11–12 (DH) coordinates 1-deoxy-D-xylulose 5-phosphate. Residue R20 coordinates 3-amino-2-oxopropyl phosphate. Catalysis depends on H45, which acts as the Proton acceptor. 2 residues coordinate 1-deoxy-D-xylulose 5-phosphate: R47 and H52. The active-site Proton acceptor is the E72. T102 contributes to the 1-deoxy-D-xylulose 5-phosphate binding site. Residue H189 is the Proton donor of the active site. Residues G190 and 211 to 212 (GH) contribute to the 3-amino-2-oxopropyl phosphate site.

It belongs to the PNP synthase family. As to quaternary structure, homooctamer; tetramer of dimers.

The protein resides in the cytoplasm. It catalyses the reaction 3-amino-2-oxopropyl phosphate + 1-deoxy-D-xylulose 5-phosphate = pyridoxine 5'-phosphate + phosphate + 2 H2O + H(+). The protein operates within cofactor biosynthesis; pyridoxine 5'-phosphate biosynthesis; pyridoxine 5'-phosphate from D-erythrose 4-phosphate: step 5/5. Its function is as follows. Catalyzes the complicated ring closure reaction between the two acyclic compounds 1-deoxy-D-xylulose-5-phosphate (DXP) and 3-amino-2-oxopropyl phosphate (1-amino-acetone-3-phosphate or AAP) to form pyridoxine 5'-phosphate (PNP) and inorganic phosphate. This Ehrlichia ruminantium (strain Welgevonden) protein is Pyridoxine 5'-phosphate synthase.